A 134-amino-acid polypeptide reads, in one-letter code: Large ribosomal subunit protein uL16c (134 aa).

The protein belongs to the universal ribosomal protein uL16 family. In terms of assembly, part of the 50S ribosomal subunit.

The protein localises to the plastid. Its subcellular location is the chloroplast. This is Large ribosomal subunit protein uL16c from Guillardia theta (Cryptophyte).